Reading from the N-terminus, the 208-residue chain is Small ribosomal subunit protein uS4 (208 aa).

The interval 31–50 is disordered; the sequence is SALDKRAYGPGQHGQRRTKT. The S4 RNA-binding domain occupies 98–161; that stretch reads RRLDNVVYRM…KSNPQVVRAM (64 aa).

It belongs to the universal ribosomal protein uS4 family. In terms of assembly, part of the 30S ribosomal subunit. Contacts protein S5. The interaction surface between S4 and S5 is involved in control of translational fidelity.

In terms of biological role, one of the primary rRNA binding proteins, it binds directly to 16S rRNA where it nucleates assembly of the body of the 30S subunit. Its function is as follows. With S5 and S12 plays an important role in translational accuracy. This is Small ribosomal subunit protein uS4 from Helicobacter pylori (strain J99 / ATCC 700824) (Campylobacter pylori J99).